A 167-amino-acid chain; its full sequence is Lipoprotein signal peptidase (167 aa).

Helical transmembrane passes span 8–28, 46–66, 68–88, and 101–121; these read TFLTLLLLASIDWVSKLVVLL, WGHFSFLIIPSFNEGAAFGLF, QYKIPLLIFRVCVILGLALFL, and VALTLILAGALGNVGDILLYG. Catalysis depends on residues Asp-125 and Asp-143. The helical transmembrane segment at 139-159 threads the bilayer; it reads FNLADAFISIGTLLLIGHLYF.

The protein belongs to the peptidase A8 family.

It localises to the cell inner membrane. The catalysed reaction is Release of signal peptides from bacterial membrane prolipoproteins. Hydrolyzes -Xaa-Yaa-Zaa-|-(S,diacylglyceryl)Cys-, in which Xaa is hydrophobic (preferably Leu), and Yaa (Ala or Ser) and Zaa (Gly or Ala) have small, neutral side chains.. It participates in protein modification; lipoprotein biosynthesis (signal peptide cleavage). In terms of biological role, this protein specifically catalyzes the removal of signal peptides from prolipoproteins. The chain is Lipoprotein signal peptidase from Chlamydia trachomatis serovar A (strain ATCC VR-571B / DSM 19440 / HAR-13).